The primary structure comprises 340 residues: Uroporphyrinogen decarboxylase (340 aa).

Substrate is bound by residues 21-25 (RQAGR), Phe40, Asp71, Tyr147, Ser202, and His316.

The protein belongs to the uroporphyrinogen decarboxylase family. Homodimer.

Its subcellular location is the cytoplasm. It carries out the reaction uroporphyrinogen III + 4 H(+) = coproporphyrinogen III + 4 CO2. It functions in the pathway porphyrin-containing compound metabolism; protoporphyrin-IX biosynthesis; coproporphyrinogen-III from 5-aminolevulinate: step 4/4. In terms of biological role, catalyzes the decarboxylation of four acetate groups of uroporphyrinogen-III to yield coproporphyrinogen-III. This Helicobacter hepaticus (strain ATCC 51449 / 3B1) protein is Uroporphyrinogen decarboxylase.